Here is a 181-residue protein sequence, read N- to C-terminus: Oligoribonuclease (181 aa).

Positions 8 to 171 (LIWIDLEMTG…DDIRESIAEL (164 aa)) constitute an Exonuclease domain. Y129 is an active-site residue.

It belongs to the oligoribonuclease family.

It localises to the cytoplasm. In terms of biological role, 3'-to-5' exoribonuclease specific for small oligoribonucleotides. This chain is Oligoribonuclease, found in Vibrio vulnificus (strain CMCP6).